The primary structure comprises 590 residues: Phosphate-repressible phosphate permease pho-4 (590 aa).

The next 8 helical transmembrane spans lie at 6–26 (FDYL…NIGA), 44–64 (YLQA…GVGA), 85–105 (ALLM…LTMA), 118–138 (IMGG…VQWV), 149–169 (VFLA…IIFL), 186–206 (FVMV…LLLW), 220–240 (IAGT…IFLM), and 246–266 (IVIL…PLLL). Topologically, residues 267-466 (RRGEVPPPPA…GALPEKGKAD (200 aa)) are cytoplasmic. The interval 297–361 (ARRAAQNGDS…PQIKTMVGPR (65 aa)) is disordered. Over residues 313-322 (VTSSTSNPSA) the composition is skewed to polar residues. The span at 325-345 (DGEKGATITKDDSSYSHDHSE) shows a compositional bias: basic and acidic residues. 4 consecutive transmembrane segments (helical) span residues 467–487 (VPVW…WTYG), 506–525 (GFSM…RLKL), 527–547 (VSTT…SGTW), and 561–581 (GWFI…GIII).

The protein belongs to the inorganic phosphate transporter (PiT) (TC 2.A.20) family.

Its subcellular location is the cell membrane. Phosphate transport activity is competitively inhibited by vanadate and arsenate. High-affinity transporter for external inorganic phosphate. Acts probably as a sodium-phosphate symporter. Component of the high affinity phosphate transport system II (ptsII) necessary for scavenging phosphorus from the environment under conditions of limiting phosphorus. This is Phosphate-repressible phosphate permease pho-4 from Neurospora crassa (strain ATCC 24698 / 74-OR23-1A / CBS 708.71 / DSM 1257 / FGSC 987).